The primary structure comprises 286 residues: Shikimate dehydrogenase (NADP(+)) (286 aa).

Residues 20 to 22 (SLS) and T67 each bind shikimate. The Proton acceptor role is filled by K71. Residues N92 and D107 each coordinate shikimate. Residues 132–136 (GAGGA) and M228 each bind NADP(+). Y230 serves as a coordination point for shikimate. G251 is a binding site for NADP(+).

This sequence belongs to the shikimate dehydrogenase family. As to quaternary structure, homodimer.

It catalyses the reaction shikimate + NADP(+) = 3-dehydroshikimate + NADPH + H(+). Its pathway is metabolic intermediate biosynthesis; chorismate biosynthesis; chorismate from D-erythrose 4-phosphate and phosphoenolpyruvate: step 4/7. Involved in the biosynthesis of the chorismate, which leads to the biosynthesis of aromatic amino acids. Catalyzes the reversible NADPH linked reduction of 3-dehydroshikimate (DHSA) to yield shikimate (SA). The chain is Shikimate dehydrogenase (NADP(+)) from Geobacter metallireducens (strain ATCC 53774 / DSM 7210 / GS-15).